Reading from the N-terminus, the 367-residue chain is UDP-N-acetylglucosamine--N-acetylmuramyl-(pentapeptide) pyrophosphoryl-undecaprenol N-acetylglucosamine transferase (367 aa).

UDP-N-acetyl-alpha-D-glucosamine is bound by residues 15–17, N127, R163, S191, I249, and Q294; that span reads TGG.

The protein belongs to the glycosyltransferase 28 family. MurG subfamily.

The protein resides in the cell inner membrane. The enzyme catalyses di-trans,octa-cis-undecaprenyl diphospho-N-acetyl-alpha-D-muramoyl-L-alanyl-D-glutamyl-meso-2,6-diaminopimeloyl-D-alanyl-D-alanine + UDP-N-acetyl-alpha-D-glucosamine = di-trans,octa-cis-undecaprenyl diphospho-[N-acetyl-alpha-D-glucosaminyl-(1-&gt;4)]-N-acetyl-alpha-D-muramoyl-L-alanyl-D-glutamyl-meso-2,6-diaminopimeloyl-D-alanyl-D-alanine + UDP + H(+). It functions in the pathway cell wall biogenesis; peptidoglycan biosynthesis. Its function is as follows. Cell wall formation. Catalyzes the transfer of a GlcNAc subunit on undecaprenyl-pyrophosphoryl-MurNAc-pentapeptide (lipid intermediate I) to form undecaprenyl-pyrophosphoryl-MurNAc-(pentapeptide)GlcNAc (lipid intermediate II). This chain is UDP-N-acetylglucosamine--N-acetylmuramyl-(pentapeptide) pyrophosphoryl-undecaprenol N-acetylglucosamine transferase, found in Burkholderia cenocepacia (strain ATCC BAA-245 / DSM 16553 / LMG 16656 / NCTC 13227 / J2315 / CF5610) (Burkholderia cepacia (strain J2315)).